The following is a 124-amino-acid chain: Small ribosomal subunit protein uS12 (124 aa).

Aspartate 90 carries the post-translational modification 3-methylthioaspartic acid.

This sequence belongs to the universal ribosomal protein uS12 family. Part of the 30S ribosomal subunit. Contacts proteins S8 and S17. May interact with IF1 in the 30S initiation complex.

Its function is as follows. With S4 and S5 plays an important role in translational accuracy. Interacts with and stabilizes bases of the 16S rRNA that are involved in tRNA selection in the A site and with the mRNA backbone. Located at the interface of the 30S and 50S subunits, it traverses the body of the 30S subunit contacting proteins on the other side and probably holding the rRNA structure together. The combined cluster of proteins S8, S12 and S17 appears to hold together the shoulder and platform of the 30S subunit. This is Small ribosomal subunit protein uS12 from Wolbachia pipientis subsp. Culex pipiens (strain wPip).